Reading from the N-terminus, the 484-residue chain is MNEDMMTEAERASIAADGTDGLLGKRGKGVFHIHTLGCQMNVHDSERIAGVLEANGYVPATEDQINDNDLDLLVLNTCAVRENAAERMYGTIGRFNRVKLVRPNLQIAVGGCMAQLDRKKIADTAPWVSAVFGTKNIEDLPKLLDQNRATGKAQVQVTEQLRQFPSQLPAARASRISSWVAISVGCNNTCTFCIVPTTRGKEKDRRPGDILDEIRQCVADGAKEVTLLGQNVNSFGYGIGDRYAFSKLLRACGTIDGLERVRFTSPHPAAFTDDVIAAMAETPNIMHQLHFPLQSGSDRILRAMRRSYRSAKFLDILGRIRAAMPDAQISTDIIVGFPGETEEDFQQTMDVVRQARFSSAFTFIYSPRPGTPAAAMEQIPRDVVQDRFDRLVALQEQITEENLATFEGRDVEVMITGKLGKKDTDTHRVTGREKTGVLVHIGVPEGEPVPEIGDFVTATVTHAGRHNLLADPDVAAGQTYSVRH.

The MTTase N-terminal domain maps to 29–149; that stretch reads GVFHIHTLGC…LPKLLDQNRA (121 aa). [4Fe-4S] cluster is bound by residues Cys-38, Cys-78, Cys-112, Cys-186, Cys-190, and Cys-193. Residues 172-401 enclose the Radical SAM core domain; it reads RASRISSWVA…VALQEQITEE (230 aa). The 71-residue stretch at 404–474 folds into the TRAM domain; sequence ATFEGRDVEV…RHNLLADPDV (71 aa).

This sequence belongs to the methylthiotransferase family. MiaB subfamily. In terms of assembly, monomer. Requires [4Fe-4S] cluster as cofactor.

Its subcellular location is the cytoplasm. It catalyses the reaction N(6)-dimethylallyladenosine(37) in tRNA + (sulfur carrier)-SH + AH2 + 2 S-adenosyl-L-methionine = 2-methylsulfanyl-N(6)-dimethylallyladenosine(37) in tRNA + (sulfur carrier)-H + 5'-deoxyadenosine + L-methionine + A + S-adenosyl-L-homocysteine + 2 H(+). Functionally, catalyzes the methylthiolation of N6-(dimethylallyl)adenosine (i(6)A), leading to the formation of 2-methylthio-N6-(dimethylallyl)adenosine (ms(2)i(6)A) at position 37 in tRNAs that read codons beginning with uridine. This chain is tRNA-2-methylthio-N(6)-dimethylallyladenosine synthase, found in Bifidobacterium longum (strain DJO10A).